The chain runs to 205 residues: ATP synthase subunit b (205 aa).

A helical membrane pass occupies residues 51–69 (FAWRCLDFAVLLAIVVWAL).

Belongs to the ATPase B chain family. In terms of assembly, F-type ATPases have 2 components, F(1) - the catalytic core - and F(0) - the membrane proton channel. F(1) has five subunits: alpha(3), beta(3), gamma(1), delta(1), epsilon(1). F(0) has three main subunits: a(1), b(2) and c(10-14). The alpha and beta chains form an alternating ring which encloses part of the gamma chain. F(1) is attached to F(0) by a central stalk formed by the gamma and epsilon chains, while a peripheral stalk is formed by the delta and b chains.

The protein localises to the cell inner membrane. Its function is as follows. F(1)F(0) ATP synthase produces ATP from ADP in the presence of a proton or sodium gradient. F-type ATPases consist of two structural domains, F(1) containing the extramembraneous catalytic core and F(0) containing the membrane proton channel, linked together by a central stalk and a peripheral stalk. During catalysis, ATP synthesis in the catalytic domain of F(1) is coupled via a rotary mechanism of the central stalk subunits to proton translocation. In terms of biological role, component of the F(0) channel, it forms part of the peripheral stalk, linking F(1) to F(0). The chain is ATP synthase subunit b from Geotalea uraniireducens (strain Rf4) (Geobacter uraniireducens).